Reading from the N-terminus, the 473-residue chain is 3-isopropylmalate dehydratase large subunit (473 aa).

The disordered stretch occupies residues 289–319 (TVTWGTTPGQTAGITEPIPDPDDLPEEDRDT). Over residues 291–301 (TWGTTPGQTAG) the composition is skewed to polar residues. The segment covering 307–317 (PDPDDLPEEDR) has biased composition (acidic residues). 3 residues coordinate [4Fe-4S] cluster: cysteine 348, cysteine 408, and cysteine 411.

It belongs to the aconitase/IPM isomerase family. LeuC type 1 subfamily. As to quaternary structure, heterodimer of LeuC and LeuD. It depends on [4Fe-4S] cluster as a cofactor.

The enzyme catalyses (2R,3S)-3-isopropylmalate = (2S)-2-isopropylmalate. It functions in the pathway amino-acid biosynthesis; L-leucine biosynthesis; L-leucine from 3-methyl-2-oxobutanoate: step 2/4. Its function is as follows. Catalyzes the isomerization between 2-isopropylmalate and 3-isopropylmalate, via the formation of 2-isopropylmaleate. The protein is 3-isopropylmalate dehydratase large subunit of Halorubrum lacusprofundi (strain ATCC 49239 / DSM 5036 / JCM 8891 / ACAM 34).